We begin with the raw amino-acid sequence, 118 residues long: Ribonuclease P protein component (118 aa).

This sequence belongs to the RnpA family. In terms of assembly, consists of a catalytic RNA component (M1 or rnpB) and a protein subunit.

It catalyses the reaction Endonucleolytic cleavage of RNA, removing 5'-extranucleotides from tRNA precursor.. RNaseP catalyzes the removal of the 5'-leader sequence from pre-tRNA to produce the mature 5'-terminus. It can also cleave other RNA substrates such as 4.5S RNA. The protein component plays an auxiliary but essential role in vivo by binding to the 5'-leader sequence and broadening the substrate specificity of the ribozyme. The polypeptide is Ribonuclease P protein component (Rickettsia peacockii (strain Rustic)).